A 250-amino-acid chain; its full sequence is 5-oxoprolinase subunit A (250 aa).

The protein belongs to the LamB/PxpA family. In terms of assembly, forms a complex composed of PxpA, PxpB and PxpC.

The enzyme catalyses 5-oxo-L-proline + ATP + 2 H2O = L-glutamate + ADP + phosphate + H(+). Its function is as follows. Catalyzes the cleavage of 5-oxoproline to form L-glutamate coupled to the hydrolysis of ATP to ADP and inorganic phosphate. In Paraburkholderia xenovorans (strain LB400), this protein is 5-oxoprolinase subunit A.